Reading from the N-terminus, the 2381-residue chain is Myb-like protein U (2381 aa).

Disordered regions lie at residues 1-85 (MKTK…TSNN), 148-167 (SSSGTVNNSNNNNNNDGGIS), 178-492 (PTIP…NNNN), and 641-696 (NINN…GDEM). Low complexity-rich tracts occupy residues 30-41 (SKSSSKVSQSSS) and 64-79 (TIPAPLSTTITPPTLT). 3 stretches are compositionally biased toward low complexity: residues 192–204 (NLSSSTSSTNILS), 225–261 (ENVNNINSGNVKNSKNNSGSSISSSISSSSSSGSSSS), and 291–315 (SNKSNSKKSSSNKSKSPSNKNNNKK). Residues 331–343 (SEYDSSDSSDMDL) show a composition bias toward acidic residues. Over residues 363–405 (TTKPNNSNSNNNNNNNSINSTIPASNNINSANNSKTTNKNITS) the composition is skewed to low complexity. A compositionally biased stretch (polar residues) spans 421-430 (SETPILTSVK). Low complexity-rich tracts occupy residues 435–492 (QQIP…NNNN) and 641–692 (NINN…NNNN). The 44-residue stretch at 856 to 899 (WHEEEKLLFRELFCAYGRDWQMVSTLMCGTKSPTQIKNFYYDVR) folds into the Myb-like domain. Disordered stretches follow at residues 932–1024 (KPEQ…ETPP), 1068–1093 (INQSSNSSPVNNNNSNNNNNNNNINP), 1145–1207 (TSST…SNQE), 1295–1339 (STTT…PPID), 1422–1474 (PYYP…LSTP), 1597–1647 (PPAT…TTIV), 1667–1849 (PIVK…PPPV), 1961–1985 (TTVPGTTTTTNPNGSIPPKPSNGLA), 2055–2106 (TSTV…NGLT), and 2122–2280 (LSGI…NKND). Residues 936–953 (NVNSNNNNNGGGNSLKDG) show a composition bias toward low complexity. Positions 982–995 (VKKKSRTASKRSFR) are enriched in basic residues. Residues 1000–1013 (ANETNRTPKNQPKP) show a composition bias toward polar residues. Low complexity-rich tracts occupy residues 1069–1092 (NQSSNSSPVNNNNSNNNNNNNNIN), 1145–1186 (TSST…TGSA), 1195–1205 (VNNNNNNNLSN), and 1306–1325 (TTTPTQQQFQQLQPTQQLQQ). Residues 1326-1337 (LPPPPPPPPKPP) show a composition bias toward pro residues. The span at 1427-1474 (PSSTTTNSATSTPTSTPTSTPSTSASTLTPTSTPTSTPVPAPTSLSTP) shows a compositional bias: low complexity. Pro residues predominate over residues 1597–1606 (PPATITPILP). Residues 1618 to 1637 (SSSSSSSSSSSSSSSSSSSS) show a composition bias toward low complexity. 2 stretches are compositionally biased toward polar residues: residues 1638 to 1647 (TTKNNSTTIV) and 1671 to 1701 (QESNSPSKTLPPSNSPSKTLPLSNSPSKTLL). Low complexity-rich tracts occupy residues 1702–1735 (PSNSSIPNKSTPSPIPKPTTSSTTYPVTTSNPSS) and 1743–1809 (TSNK…TLKP). Polar residues predominate over residues 1829-1844 (APTNSTNQNTIPNATT). Low complexity-rich tracts occupy residues 1961–1970 (TTVPGTTTTT) and 2065–2097 (NNMTTTTTSSTSTTMTTPTSTNTTTNGTPQQST). Residues 2129–2138 (NTLSGKSPTP) show a composition bias toward polar residues. The span at 2154-2209 (PSLSSSSANPISITNNTTSLSQQSNTTNTMPSTVSLSSGSTSINSNSSNSKSLRSP) shows a compositional bias: low complexity. Residues 2210–2278 (KSSDNDGKES…NNNDKFDSNK (69 aa)) are compositionally biased toward basic and acidic residues.

This chain is Myb-like protein U (mybU), found in Dictyostelium discoideum (Social amoeba).